A 266-amino-acid chain; its full sequence is Methyl-coenzyme M reductase II subunit gamma (266 aa).

Arg-123 is a coenzyme M binding site.

The protein belongs to the methyl-coenzyme M reductase gamma subunit family. In terms of assembly, MCR is a hexamer of two alpha, two beta, and two gamma chains, forming a dimer of heterotrimers. Coenzyme F430 serves as cofactor.

It catalyses the reaction coenzyme B + methyl-coenzyme M = methane + coenzyme M-coenzyme B heterodisulfide. Its pathway is one-carbon metabolism; methyl-coenzyme M reduction; methane from methyl-coenzyme M: step 1/1. Functionally, component of the methyl-coenzyme M reductase (MCR) I that catalyzes the reductive cleavage of methyl-coenzyme M (CoM-S-CH3 or 2-(methylthio)ethanesulfonate) using coenzyme B (CoB or 7-mercaptoheptanoylthreonine phosphate) as reductant which results in the production of methane and the mixed heterodisulfide of CoB and CoM (CoM-S-S-CoB). This is the final step in methanogenesis. The sequence is that of Methyl-coenzyme M reductase II subunit gamma (mrtG) from Methanocaldococcus jannaschii (strain ATCC 43067 / DSM 2661 / JAL-1 / JCM 10045 / NBRC 100440) (Methanococcus jannaschii).